The primary structure comprises 226 residues: Thymidylate kinase (226 aa).

16–23 serves as a coordination point for ATP; that stretch reads GIDGAGKT.

It belongs to the thymidylate kinase family.

It catalyses the reaction dTMP + ATP = dTDP + ADP. Phosphorylation of dTMP to form dTDP in both de novo and salvage pathways of dTTP synthesis. This is Thymidylate kinase from Xanthomonas euvesicatoria pv. vesicatoria (strain 85-10) (Xanthomonas campestris pv. vesicatoria).